The sequence spans 233 residues: Small ribosomal subunit protein uS3 (233 aa).

One can recognise a KH type-2 domain in the interval 39-107; that stretch reads VREFLKAKLK…PVHVNIEEVR (69 aa). Residues 209-233 are disordered; the sequence is PGQVSAEPTQPEKKMRKGGRNAAAN.

It belongs to the universal ribosomal protein uS3 family. Part of the 30S ribosomal subunit. Forms a tight complex with proteins S10 and S14.

Binds the lower part of the 30S subunit head. Binds mRNA in the 70S ribosome, positioning it for translation. This chain is Small ribosomal subunit protein uS3, found in Laribacter hongkongensis (strain HLHK9).